A 352-amino-acid polypeptide reads, in one-letter code: Gap junction alpha-4 protein (352 aa).

Topologically, residues 2-23 (GDWEFLEKLLDQVQEHSTSIGK) are cytoplasmic. Residues 24–46 (IWLMVLFIFRILILGLAGESVWG) form a helical membrane-spanning segment. Residues 47–76 (DEQSDFTCNTEQPGCTNVCYDKAFPISHVR) are Extracellular-facing. The helical transmembrane segment at 77 to 99 (YWVLQFLFVSTPTLFYLGHVIYL) threads the bilayer. Over 100–153 (SRKEEKLKQKESELRALDDKEQVEQAIAIIEKKKLKLYIQEDGTVKIKGALMYT) the chain is Cytoplasmic. The chain crosses the membrane as a helical span at residues 154–176 (YLTSVIFKSIFEAGFLLGQWYLY). The Extracellular portion of the chain corresponds to 177–208 (GFVMTPIYVCERVPCPHKVDCFVSRPMEKTIF). The chain crosses the membrane as a helical span at residues 209-231 (IIFMLVVSLISLFLNVLELIHLI). Topologically, residues 232–352 (CKSMIHALKK…SSSASKKQYV (121 aa)) are cytoplasmic. Residues 332 to 352 (HSTVEKASTRASSSASKKQYV) form a disordered region. The span at 340–352 (TRASSSASKKQYV) shows a compositional bias: low complexity.

Belongs to the connexin family. Alpha-type (group II) subfamily. A connexon is composed of a hexamer of connexins. Expressed in ovarian somatic cells, heart, leg muscle, liver and eye but not in brain.

It is found in the cell membrane. The protein resides in the cell junction. The protein localises to the gap junction. Its function is as follows. One gap junction consists of a cluster of closely packed pairs of transmembrane channels, the connexons, through which materials of low MW diffuse from one cell to a neighboring cell. This is Gap junction alpha-4 protein (gja4) from Xenopus laevis (African clawed frog).